Here is a 148-residue protein sequence, read N- to C-terminus: MPEINSVIIAGNLTKDPVFRQTNSGGTPVVNFSIACNRRFRDSNHQWQEDVCYVGVVAWNKLAESCRDNLRKSSAVLVDGELQSRTWKAQDGTSRTVVEIKARRIQFLNKRKKNGEDDEEGFIEDDTHETHHLDDDGHMYEYKYLSSD.

The 106-residue stretch at isoleucine 4–asparagine 109 folds into the SSB domain.

In terms of assembly, homotetramer.

This chain is Single-stranded DNA-binding protein 2 (ssb2), found in Chlorobaculum tepidum (strain ATCC 49652 / DSM 12025 / NBRC 103806 / TLS) (Chlorobium tepidum).